The sequence spans 577 residues: MNIQSILSNKIKQAMRQAGADEQCDALVKPSSKPQFGDYQANGIMATAKKLGLNPRDFAQKVLDLIDLKNIAEKMEIAGPGFINIFLDKNWLAENIQVTLQDKKLGVTVEEIQTIVVDYSSPNVAKEMHVGHLRSTIIGDAVVRTLEFLGHNVIRANHVGDWGTQFGMLIAYLEKMENEHASAMELADLEAFYRAAKEHYDNDETFAEKARNYVVKLQNGDAYCRTMWKKLVDITMQQNQRNYDRLNVTLTQNDVMGESLYNPMLPEIVADLKAQGLAVEDEGAQVVYLEEFKNKDGDPMGVIVQKKDGGFLYTTTDIAAAKYRYHTLKADRALVFSDTRQSQHMQQAWLITRKAGYVPDSFQLEHKNFGMMLGKDGKPFKTRSGGTVKLTDLLDEAIERADKLISEKSTALSSKEKAAVIEAVGIGSVKYADLSKNRTTDYVFDWDIMLSFEGNTAPYMQYAYTRIRSIFNKTDISEEQLHPAKIQLTDEKERLLAIKLLQFEETVQIVGKEGTPHILCAYLYELAGLFSSFYEHCPILNNDNENVKLSRLKLALLTEKTLKQGLDLLGIKTVEKM.

The 'HIGH' region signature appears at proline 122 to histidine 132.

Belongs to the class-I aminoacyl-tRNA synthetase family. Monomer.

It localises to the cytoplasm. It catalyses the reaction tRNA(Arg) + L-arginine + ATP = L-arginyl-tRNA(Arg) + AMP + diphosphate. This is Arginine--tRNA ligase from Histophilus somni (strain 2336) (Haemophilus somnus).